Here is a 242-residue protein sequence, read N- to C-terminus: Probable porphobilinogen deaminase (242 aa).

This sequence belongs to the HMBS family.

The catalysed reaction is 4 porphobilinogen + H2O = hydroxymethylbilane + 4 NH4(+). It functions in the pathway porphyrin-containing compound metabolism; protoporphyrin-IX biosynthesis; coproporphyrinogen-III from 5-aminolevulinate: step 2/4. Functionally, tetrapolymerization of the monopyrrole PBG into the hydroxymethylbilane pre-uroporphyrinogen in several discrete steps. This chain is Probable porphobilinogen deaminase (hemC), found in Chlamydia muridarum (strain MoPn / Nigg).